Here is a 317-residue protein sequence, read N- to C-terminus: L-lactate dehydrogenase (317 aa).

NAD(+)-binding residues include Val-16, Asp-37, and Tyr-68. Substrate is bound by residues Gln-85, Arg-91, 123–126, and 151–154; these read NPCD and DSAR. An NAD(+)-binding site is contributed by 121–123; the sequence is ASN. His-178 acts as the Proton acceptor in catalysis. Position 222 is a phosphotyrosine (Tyr-222). Substrate is bound at residue Thr-231.

This sequence belongs to the LDH/MDH superfamily. LDH family. As to quaternary structure, homotetramer.

Its subcellular location is the cytoplasm. The catalysed reaction is (S)-lactate + NAD(+) = pyruvate + NADH + H(+). Its pathway is fermentation; pyruvate fermentation to lactate; (S)-lactate from pyruvate: step 1/1. Its function is as follows. Catalyzes the conversion of lactate to pyruvate. The sequence is that of L-lactate dehydrogenase from Mesoplasma florum (strain ATCC 33453 / NBRC 100688 / NCTC 11704 / L1) (Acholeplasma florum).